Here is a 260-residue protein sequence, read N- to C-terminus: Indole-3-glycerol phosphate synthase (260 aa).

This sequence belongs to the TrpC family.

The enzyme catalyses 1-(2-carboxyphenylamino)-1-deoxy-D-ribulose 5-phosphate + H(+) = (1S,2R)-1-C-(indol-3-yl)glycerol 3-phosphate + CO2 + H2O. Its pathway is amino-acid biosynthesis; L-tryptophan biosynthesis; L-tryptophan from chorismate: step 4/5. The protein is Indole-3-glycerol phosphate synthase of Lactiplantibacillus plantarum (strain ATCC BAA-793 / NCIMB 8826 / WCFS1) (Lactobacillus plantarum).